The chain runs to 166 residues: Large ribosomal subunit protein bL17 (166 aa).

The tract at residues 122–166 is disordered; the sequence is PESAPVKAKQDRSKRVRGSKKTQEGSEKAEVSASAGEAAAVTEEK. Residues 142 to 151 are compositionally biased toward basic and acidic residues; it reads KTQEGSEKAE. Over residues 152–166 the composition is skewed to low complexity; that stretch reads VSASAGEAAAVTEEK.

The protein belongs to the bacterial ribosomal protein bL17 family. Part of the 50S ribosomal subunit. Contacts protein L32.

The polypeptide is Large ribosomal subunit protein bL17 (Chlorobium phaeobacteroides (strain BS1)).